The following is a 257-amino-acid chain: Discoidin-2 (257 aa).

A beta-sandwich region spans residues 1 to 155; that stretch reads MSVPAGSVSC…SLRWELYALP (155 aa). Positions 10–154 constitute an F5/8 type C domain; it reads CLANALLNLR…ISLRWELYAL (145 aa). Ca(2+)-binding residues include Asn39, Ser40, and Asp47. Positions 81–83 match the Cell attachment site motif; the sequence is RGD. His84 carries the phosphohistidine modification. Residues 156–162 form a linker region; the sequence is VKSYSNP. Positions 163–257 are lectin-like; that stretch reads SVQVGEVSIG…FDYVAVEFNN (95 aa). Asp209, Arg218, and Trp238 together coordinate a carbohydrate.

As to quaternary structure, homotrimer. The N-terminus is blocked. As to expression, maturing spore cells.

Galactose-binding lectin. May be necessary for the primary process of spore formation and may be involved in spore coat formation. The sequence is that of Discoidin-2 (dscE) from Dictyostelium discoideum (Social amoeba).